Here is a 297-residue protein sequence, read N- to C-terminus: Averufin oxidase stcO (297 aa).

Residues 277 to 297 (VVVLGVCILLLLGGLLYSIKA) form a helical membrane-spanning segment.

This sequence belongs to the avfA family.

The protein resides in the membrane. Its pathway is mycotoxin biosynthesis; sterigmatocystin biosynthesis. Functionally, averufin oxidase; part of the gene cluster that mediates the biosynthesis of sterigmatocystin (ST), a polyketide-derived furanocoumarin which is part of the most toxic and carcinogenic compounds among the known mycotoxins. The first step in the biosynthesis of sterigmatocystin is the production of hexanoate by the fatty acid synthase (FAS) units stcJ and stcK. The polyketide backbone is assembled by the non-reducing polyketide synthase stcA by condensation of the starter hexanoyl-CoA and 7 malonyl-CoA extender units followed by cyclization and release of norsolorinic acid. Norsolorinic acid is the first stable intermediate in the biosynthesis of sterigmatocystin and is converted into averantin (AVN) by the ketoreductase stcE which reduces the hexanoate ketone to an alcohol. Averantin is then oxidized into 5'-hydroxyaverantin (HAVN) by the cytochrome P450 monooxygenase stcF. 5'-hydroxyaverantin is further converted to 5'-oxyaverantin (OAVN) by the 5'-hydroxyaverantin dehydrogenase stcG. The next step is the conversion of OAVN into averufin (AVF) which is catalyzed by a yet to be identified enzyme. The cytochrome P450 monooxygenase stcB and the flavin-binding monooxygenase stcW are both required for the conversion of averufin to 1-hydroxyversicolorone. The esterase stcI probably catalyzes the formation of versiconal hemiacetal acetate from 1-hydroxyversicolorone. The oxydoreductase stcN then probably catalyzes the biosynthetic step from versiconal to versicolorin B (VERB). The next step is performed by the versicolorin B desaturase stcL to produce versicolorin A (VERA). The ketoreductase stcU and the cytochrome P450 monooxygenase stcS are involved in the conversion of versicolorin A to demethylsterigmatocystin. The Baeyer-Villiger oxidas stcQ and the reductase stcR might be involved in the biosynthetic step from versicolorin A to demethylsterigmatocystin. The final step in the biosynthesis of sterigmatocystin is the methylation of demethylsterigmatocystin catalyzed by the methyltransferase stcP. The chain is Averufin oxidase stcO from Emericella nidulans (strain FGSC A4 / ATCC 38163 / CBS 112.46 / NRRL 194 / M139) (Aspergillus nidulans).